Consider the following 625-residue polypeptide: Phosphomethylpyrimidine synthase (625 aa).

Substrate is bound by residues Asn230, Met259, Tyr288, His324, 344-346 (SRG), 385-388 (DGLR), and Glu424. A Zn(2+)-binding site is contributed by His428. Tyr451 lines the substrate pocket. His492 contacts Zn(2+). 3 residues coordinate [4Fe-4S] cluster: Cys572, Cys575, and Cys580.

It belongs to the ThiC family. Homodimer. Requires [4Fe-4S] cluster as cofactor.

The enzyme catalyses 5-amino-1-(5-phospho-beta-D-ribosyl)imidazole + S-adenosyl-L-methionine = 4-amino-2-methyl-5-(phosphooxymethyl)pyrimidine + CO + 5'-deoxyadenosine + formate + L-methionine + 3 H(+). It participates in cofactor biosynthesis; thiamine diphosphate biosynthesis. Catalyzes the synthesis of the hydroxymethylpyrimidine phosphate (HMP-P) moiety of thiamine from aminoimidazole ribotide (AIR) in a radical S-adenosyl-L-methionine (SAM)-dependent reaction. This chain is Phosphomethylpyrimidine synthase, found in Xanthomonas axonopodis pv. citri (strain 306).